A 294-amino-acid chain; its full sequence is tRNA dimethylallyltransferase (294 aa).

G7 to S14 lines the ATP pocket. T9–S14 contributes to the substrate binding site.

The protein belongs to the IPP transferase family. As to quaternary structure, monomer. The cofactor is Mg(2+).

The enzyme catalyses adenosine(37) in tRNA + dimethylallyl diphosphate = N(6)-dimethylallyladenosine(37) in tRNA + diphosphate. Catalyzes the transfer of a dimethylallyl group onto the adenine at position 37 in tRNAs that read codons beginning with uridine, leading to the formation of N6-(dimethylallyl)adenosine (i(6)A). The chain is tRNA dimethylallyltransferase from Akkermansia muciniphila (strain ATCC BAA-835 / DSM 22959 / JCM 33894 / BCRC 81048 / CCUG 64013 / CIP 107961 / Muc).